The sequence spans 195 residues: HTH-type transcriptional regulator BetI (195 aa).

The HTH tetR-type domain maps to 8–68 (PIRRQQLIEA…ATMRYLISHL (61 aa)). Residues 31 to 50 (SIVQIARRAGVSNGIISHYF) constitute a DNA-binding region (H-T-H motif).

It functions in the pathway amine and polyamine biosynthesis; betaine biosynthesis via choline pathway [regulation]. Its function is as follows. Repressor involved in the biosynthesis of the osmoprotectant glycine betaine. It represses transcription of the choline transporter BetT and the genes of BetAB involved in the synthesis of glycine betaine. The chain is HTH-type transcriptional regulator BetI from Pectobacterium atrosepticum (strain SCRI 1043 / ATCC BAA-672) (Erwinia carotovora subsp. atroseptica).